A 237-amino-acid polypeptide reads, in one-letter code: Phosphoglycolate phosphatase (237 aa).

Asp15 (nucleophile) is an active-site residue. Mg(2+) is bound by residues Asp15, Asp17, and Asp177.

This sequence belongs to the HAD-like hydrolase superfamily. CbbY/CbbZ/Gph/YieH family. The cofactor is Mg(2+).

The catalysed reaction is 2-phosphoglycolate + H2O = glycolate + phosphate. The protein operates within organic acid metabolism; glycolate biosynthesis; glycolate from 2-phosphoglycolate: step 1/1. Specifically catalyzes the dephosphorylation of 2-phosphoglycolate. Is involved in the dissimilation of the intracellular 2-phosphoglycolate formed during the DNA repair of 3'-phosphoglycolate ends, a major class of DNA lesions induced by oxidative stress. This is Phosphoglycolate phosphatase from Caulobacter vibrioides (strain ATCC 19089 / CIP 103742 / CB 15) (Caulobacter crescentus).